The primary structure comprises 430 residues: tRNA(Ile)-lysidine synthase (430 aa).

An ATP-binding site is contributed by 21–26 (SGGLDS).

It belongs to the tRNA(Ile)-lysidine synthase family.

The protein resides in the cytoplasm. The enzyme catalyses cytidine(34) in tRNA(Ile2) + L-lysine + ATP = lysidine(34) in tRNA(Ile2) + AMP + diphosphate + H(+). Ligates lysine onto the cytidine present at position 34 of the AUA codon-specific tRNA(Ile) that contains the anticodon CAU, in an ATP-dependent manner. Cytidine is converted to lysidine, thus changing the amino acid specificity of the tRNA from methionine to isoleucine. The polypeptide is tRNA(Ile)-lysidine synthase (Salmonella agona (strain SL483)).